A 51-amino-acid chain; its full sequence is ATP synthase F(1) complex subunit epsilon, mitochondrial (51 aa).

3 positions are modified to N6-acetyllysine; alternate: Lys21, Lys32, and Lys37. N6-succinyllysine; alternate is present on residues Lys21, Lys32, and Lys37. Lys44 bears the N6-acetyllysine mark.

The protein belongs to the eukaryotic ATPase epsilon family. In terms of assembly, component of the ATP synthase complex composed at least of ATP5F1A/subunit alpha, ATP5F1B/subunit beta, ATP5MC1/subunit c (homooctomer), MT-ATP6/subunit a, MT-ATP8/subunit 8, ATP5ME/subunit e, ATP5MF/subunit f, ATP5MG/subunit g, ATP5MK/subunit k, ATP5MJ/subunit j, ATP5F1C/subunit gamma, ATP5F1D/subunit delta, ATP5F1E/subunit epsilon, ATP5PF/subunit F6, ATP5PB/subunit b, ATP5PD/subunit d, ATP5PO/subunit OSCP. ATP synthase complex consists of a soluble F(1) head domain (subunits alpha(3) and beta(3)) - the catalytic core - and a membrane F(0) domain - the membrane proton channel (subunits c, a, 8, e, f, g, k and j). These two domains are linked by a central stalk (subunits gamma, delta, and epsilon) rotating inside the F1 region and a stationary peripheral stalk (subunits F6, b, d, and OSCP).

The protein localises to the mitochondrion. Its subcellular location is the mitochondrion inner membrane. In terms of biological role, subunit epsilon, of the mitochondrial membrane ATP synthase complex (F(1)F(0) ATP synthase or Complex V) that produces ATP from ADP in the presence of a proton gradient across the membrane which is generated by electron transport complexes of the respiratory chain. ATP synthase complex consist of a soluble F(1) head domain - the catalytic core - and a membrane F(1) domain - the membrane proton channel. These two domains are linked by a central stalk rotating inside the F(1) region and a stationary peripheral stalk. During catalysis, ATP synthesis in the catalytic domain of F(1) is coupled via a rotary mechanism of the central stalk subunits to proton translocation. In vivo, can only synthesize ATP although its ATP hydrolase activity can be activated artificially in vitro. May be essential for the assembly of F(1) and may play an important role in the incorporation of the hydrophobic subunit c into the F(1)-c oligomer rotor of the mitochondrial ATP synthase complex. This is ATP synthase F(1) complex subunit epsilon, mitochondrial from Bos taurus (Bovine).